A 404-amino-acid chain; its full sequence is uncharacterized protein (404 aa).

2 consecutive transmembrane segments (helical) span residues 35–55 (ILFS…FTFL) and 92–112 (EDIW…ISSI).

The protein localises to the membrane. This is an uncharacterized protein from Saccharomyces cerevisiae (strain ATCC 204508 / S288c) (Baker's yeast).